The sequence spans 187 residues: Adenylate kinase (187 aa).

ATP is bound at residue 10–15 (GSGKGT). The NMP stretch occupies residues 30–59 (STGDLLRSEVVAGTPLGLQAKQVMAQGDLV). Residues threonine 31, arginine 36, 57 to 59 (DLV), 85 to 88 (GYPR), and glutamine 92 contribute to the AMP site. Positions 126–136 (GRAQAEGREDD) are LID. Arginine 127 contributes to the ATP binding site. AMP-binding residues include arginine 133 and arginine 144. Glycine 172 provides a ligand contact to ATP.

This sequence belongs to the adenylate kinase family. Monomer.

It localises to the cytoplasm. It carries out the reaction AMP + ATP = 2 ADP. It participates in purine metabolism; AMP biosynthesis via salvage pathway; AMP from ADP: step 1/1. Functionally, catalyzes the reversible transfer of the terminal phosphate group between ATP and AMP. Plays an important role in cellular energy homeostasis and in adenine nucleotide metabolism. The chain is Adenylate kinase from Xylella fastidiosa (strain M12).